The chain runs to 108 residues: Nitrite reductase (NADH) small subunit (108 aa).

To B.subtilis NasE. Associates with NirB.

The protein localises to the cytoplasm. It carries out the reaction NH4(+) + 3 NAD(+) + 2 H2O = nitrite + 3 NADH + 5 H(+). Functionally, required for activity of the reductase. The protein is Nitrite reductase (NADH) small subunit (nirD) of Escherichia coli O157:H7.